A 139-amino-acid chain; its full sequence is Putative pre-16S rRNA nuclease (139 aa).

This sequence belongs to the YqgF nuclease family.

Its subcellular location is the cytoplasm. Could be a nuclease involved in processing of the 5'-end of pre-16S rRNA. In Streptococcus suis (strain 98HAH33), this protein is Putative pre-16S rRNA nuclease.